Reading from the N-terminus, the 630-residue chain is 1-deoxy-D-xylulose-5-phosphate synthase (630 aa).

Residues H72 and 113–115 (GHS) each bind thiamine diphosphate. Residue D144 coordinates Mg(2+). Residues 145-146 (GA), N173, Y284, and E367 contribute to the thiamine diphosphate site. N173 is a binding site for Mg(2+).

The protein belongs to the transketolase family. DXPS subfamily. As to quaternary structure, homodimer. Mg(2+) is required as a cofactor. Thiamine diphosphate serves as cofactor.

It carries out the reaction D-glyceraldehyde 3-phosphate + pyruvate + H(+) = 1-deoxy-D-xylulose 5-phosphate + CO2. It participates in metabolic intermediate biosynthesis; 1-deoxy-D-xylulose 5-phosphate biosynthesis; 1-deoxy-D-xylulose 5-phosphate from D-glyceraldehyde 3-phosphate and pyruvate: step 1/1. Its function is as follows. Catalyzes the acyloin condensation reaction between C atoms 2 and 3 of pyruvate and glyceraldehyde 3-phosphate to yield 1-deoxy-D-xylulose-5-phosphate (DXP). This chain is 1-deoxy-D-xylulose-5-phosphate synthase, found in Bacillus cereus (strain B4264).